The chain runs to 502 residues: ATP synthase subunit alpha (502 aa).

169 to 176 provides a ligand contact to ATP; it reads GDRQTGKT.

This sequence belongs to the ATPase alpha/beta chains family. In terms of assembly, F-type ATPases have 2 components, CF(1) - the catalytic core - and CF(0) - the membrane proton channel. CF(1) has five subunits: alpha(3), beta(3), gamma(1), delta(1), epsilon(1). CF(0) has three main subunits: a(1), b(2) and c(9-12). The alpha and beta chains form an alternating ring which encloses part of the gamma chain. CF(1) is attached to CF(0) by a central stalk formed by the gamma and epsilon chains, while a peripheral stalk is formed by the delta and b chains.

The protein localises to the cell membrane. It catalyses the reaction ATP + H2O + 4 H(+)(in) = ADP + phosphate + 5 H(+)(out). Its function is as follows. Produces ATP from ADP in the presence of a proton gradient across the membrane. The alpha chain is a regulatory subunit. This is ATP synthase subunit alpha from Clostridium perfringens (strain SM101 / Type A).